A 509-amino-acid polypeptide reads, in one-letter code: Probable cytochrome P450 6a14 (509 aa).

Cys454 contributes to the heme binding site.

The protein belongs to the cytochrome P450 family. The cofactor is heme.

It is found in the endoplasmic reticulum membrane. It localises to the microsome membrane. May be involved in the metabolism of insect hormones and in the breakdown of synthetic insecticides. This chain is Probable cytochrome P450 6a14 (Cyp6a14), found in Drosophila melanogaster (Fruit fly).